Here is a 189-residue protein sequence, read N- to C-terminus: MSRIGKLPISIPAGVTVTLKDDVVTVKGPKGELSQYVNPAINVAIEDGHITLTENENAMLDNPKQKHAFHGLYRSLVHNMVVGVSEGYKKELELVGVGYRASNQGNIIELALGYTHNIFIQLPPEVKVETKSERNKNPLILLESCDKQLLGQVCSKIRSFRKPEPYKGKGIKFVGEEIRRKSGKSAGAK.

Belongs to the universal ribosomal protein uL6 family. As to quaternary structure, part of the 50S ribosomal subunit.

In terms of biological role, this protein binds to the 23S rRNA, and is important in its secondary structure. It is located near the subunit interface in the base of the L7/L12 stalk, and near the tRNA binding site of the peptidyltransferase center. This is Large ribosomal subunit protein uL6 from Bacteroides fragilis (strain ATCC 25285 / DSM 2151 / CCUG 4856 / JCM 11019 / LMG 10263 / NCTC 9343 / Onslow / VPI 2553 / EN-2).